A 244-amino-acid chain; its full sequence is 3-deoxy-manno-octulosonate cytidylyltransferase (244 aa).

Belongs to the KdsB family.

It localises to the cytoplasm. It carries out the reaction 3-deoxy-alpha-D-manno-oct-2-ulosonate + CTP = CMP-3-deoxy-beta-D-manno-octulosonate + diphosphate. It participates in nucleotide-sugar biosynthesis; CMP-3-deoxy-D-manno-octulosonate biosynthesis; CMP-3-deoxy-D-manno-octulosonate from 3-deoxy-D-manno-octulosonate and CTP: step 1/1. It functions in the pathway bacterial outer membrane biogenesis; lipopolysaccharide biosynthesis. Functionally, activates KDO (a required 8-carbon sugar) for incorporation into bacterial lipopolysaccharide in Gram-negative bacteria. This is 3-deoxy-manno-octulosonate cytidylyltransferase from Vesicomyosocius okutanii subsp. Calyptogena okutanii (strain HA).